Here is a 199-residue protein sequence, read N- to C-terminus: NAD(P)H dehydrogenase (quinone) (199 aa).

In terms of domain architecture, Flavodoxin-like spans 4 to 190 (ILVLYYSMYG…AIARFQGEHV (187 aa)). Residues 10 to 15 (SMYGHI) and 79 to 81 (TRF) each bind FMN. Tyrosine 12 provides a ligand contact to NAD(+). Substrate is bound at residue tryptophan 99. Residues 114 to 119 (STGTGG) and histidine 134 contribute to the FMN site.

It belongs to the WrbA family. It depends on FMN as a cofactor.

It carries out the reaction a quinone + NADH + H(+) = a quinol + NAD(+). The catalysed reaction is a quinone + NADPH + H(+) = a quinol + NADP(+). The sequence is that of NAD(P)H dehydrogenase (quinone) from Yersinia pseudotuberculosis serotype O:1b (strain IP 31758).